The primary structure comprises 166 residues: NAD(P)H-quinone oxidoreductase subunit I, chloroplastic (166 aa).

2 consecutive 4Fe-4S ferredoxin-type domains span residues 55–84 and 95–124; these read GRIH…VDWK and LNYS…MTEE. [4Fe-4S] cluster contacts are provided by cysteine 64, cysteine 67, cysteine 70, cysteine 74, cysteine 104, cysteine 107, cysteine 110, and cysteine 114.

It belongs to the complex I 23 kDa subunit family. NDH is composed of at least 16 different subunits, 5 of which are encoded in the nucleus. Requires [4Fe-4S] cluster as cofactor.

The protein localises to the plastid. Its subcellular location is the chloroplast thylakoid membrane. The catalysed reaction is a plastoquinone + NADH + (n+1) H(+)(in) = a plastoquinol + NAD(+) + n H(+)(out). It carries out the reaction a plastoquinone + NADPH + (n+1) H(+)(in) = a plastoquinol + NADP(+) + n H(+)(out). Functionally, NDH shuttles electrons from NAD(P)H:plastoquinone, via FMN and iron-sulfur (Fe-S) centers, to quinones in the photosynthetic chain and possibly in a chloroplast respiratory chain. The immediate electron acceptor for the enzyme in this species is believed to be plastoquinone. Couples the redox reaction to proton translocation, and thus conserves the redox energy in a proton gradient. This Hulsea algida (Pacific hulsea) protein is NAD(P)H-quinone oxidoreductase subunit I, chloroplastic.